The primary structure comprises 134 residues: Large ribosomal subunit protein uL16c (134 aa).

A disordered region spans residues 1 to 22 (MLSPKRTRFRKQHRGRMKGISH).

Belongs to the universal ribosomal protein uL16 family. As to quaternary structure, part of the 50S ribosomal subunit.

It localises to the plastid. The protein resides in the chloroplast. This Nicotiana tabacum (Common tobacco) protein is Large ribosomal subunit protein uL16c.